We begin with the raw amino-acid sequence, 524 residues long: D-3-phosphoglycerate dehydrogenase (524 aa).

Residues 149–150 (RI), aspartate 169, 229–231 (CAR), and aspartate 255 contribute to the NAD(+) site. Arginine 231 is a catalytic residue. Residue glutamate 260 is part of the active site. The active-site Proton donor is histidine 278. Residue 278 to 281 (HQGA) coordinates NAD(+). The ACT domain maps to 452 to 524 (LAIIKHIDRP…NIKDVAVINL (73 aa)).

Belongs to the D-isomer specific 2-hydroxyacid dehydrogenase family.

It carries out the reaction (2R)-3-phosphoglycerate + NAD(+) = 3-phosphooxypyruvate + NADH + H(+). The protein operates within amino-acid biosynthesis; L-serine biosynthesis; L-serine from 3-phospho-D-glycerate: step 1/3. The protein is D-3-phosphoglycerate dehydrogenase (serA) of Methanocaldococcus jannaschii (strain ATCC 43067 / DSM 2661 / JAL-1 / JCM 10045 / NBRC 100440) (Methanococcus jannaschii).